Here is a 135-residue protein sequence, read N- to C-terminus: Mini-ribonuclease 3 (135 aa).

Asp-19 is an active-site residue.

The protein belongs to the MrnC RNase family. In terms of assembly, homodimer. Mg(2+) is required as a cofactor.

Its subcellular location is the cytoplasm. In terms of biological role, involved in correct processing of both the 5' and 3' ends of 23S rRNA precursor. Processes 30S rRNA precursor transcript even in absence of ribonuclease 3 (Rnc); Rnc processes 30S rRNA into smaller rRNA precursors. This chain is Mini-ribonuclease 3, found in Gloeobacter violaceus (strain ATCC 29082 / PCC 7421).